We begin with the raw amino-acid sequence, 416 residues long: Putative nucleoside permease NupX (416 aa).

Residues 1–2 (MD) lie on the Periplasmic side of the membrane. Residues 3–23 (VMRSVLGMVVLLTIAFLLSVN) traverse the membrane as a helical segment. Topologically, residues 24–31 (KKKISLRT) are cytoplasmic. A helical membrane pass occupies residues 32 to 52 (VGAALVLQVVIGGIMLWLPPG). Residues 53–95 (RWVAEKVAFGVHKVMAYSDAGSAFIFGSLVGPKMDTLFDGAGF) lie on the Periplasmic side of the membrane. The helical transmembrane segment at 96–118 (IFGFRVLPAIIFVTALVSILYYI) threads the bilayer. The Cytoplasmic segment spans residues 119–172 (GVMGILIRILGGIFQKALNISKIESFVAVTTIFLGQNEIPAIVKPFIDRLNRNE). Residues 173-193 (LFTAICSGMASIAGSTMIGYA) form a helical membrane-spanning segment. The Periplasmic portion of the chain corresponds to 194–196 (ALG). A helical membrane pass occupies residues 197–217 (VPVEYLLAASLMAIPGGILFA). The Cytoplasmic portion of the chain corresponds to 218 to 246 (RLLSPATESSQVSFNNLSFTETPPKSIIE). The chain crosses the membrane as a helical span at residues 247-267 (AAATGAMTGLKIAAGVATVVM). The Periplasmic segment spans residues 268–352 (AFVAIIALIN…QTAGTLDAKT (85 aa)). Residues 353-373 (VAIISFALCGFANFGSIGVVV) form a helical membrane-spanning segment. Residues 374 to 394 (GAFSAVAPHRAPEIAQLGLRA) lie on the Cytoplasmic side of the membrane. The chain crosses the membrane as a helical span at residues 395–415 (LAAATLSNLMSATIAGFFIGL). Residue A416 is a topological domain, periplasmic.

It belongs to the concentrative nucleoside transporter (CNT) (TC 2.A.41) family.

The protein resides in the cell inner membrane. The protein is Putative nucleoside permease NupX (nupX) of Escherichia coli (strain K12).